Consider the following 262-residue polypeptide: MRIALVVEYDGSQYHGWQAQTGLHTIQQAVEFALSKVADSSISVVCAGRTDTGVHATNQVIHFDCEKDRSIRAWIHGANSFLPKDICVKWGKEMPENFHARYSAVSRRYRYVIYNGAIRPGLLRGNVTWQYRQLDHRLMQQGGQCLLGENDFTSFRSVECQSNTPMRNIHQLQVTRHGDLVVLDITANAFLHHMVRNIAGVLIAVGSGKHPVGWVKDVLNAKDRKLGAETAPSYGLYLVQVTYPKEFGLLQNNPGPLFLWEK.

Aspartate 51 serves as the catalytic Nucleophile. Tyrosine 109 serves as a coordination point for substrate.

Belongs to the tRNA pseudouridine synthase TruA family. In terms of assembly, homodimer.

It catalyses the reaction uridine(38/39/40) in tRNA = pseudouridine(38/39/40) in tRNA. Its function is as follows. Formation of pseudouridine at positions 38, 39 and 40 in the anticodon stem and loop of transfer RNAs. This chain is tRNA pseudouridine synthase A, found in Legionella pneumophila (strain Lens).